The primary structure comprises 197 residues: Peptidyl-tRNA hydrolase (197 aa).

TRNA is bound at residue Tyr-23. Residue His-28 is the Proton acceptor of the active site. TRNA is bound by residues Phe-73, Asn-75, and Asn-121.

The protein belongs to the PTH family. As to quaternary structure, monomer.

The protein localises to the cytoplasm. It carries out the reaction an N-acyl-L-alpha-aminoacyl-tRNA + H2O = an N-acyl-L-amino acid + a tRNA + H(+). Hydrolyzes ribosome-free peptidyl-tRNAs (with 1 or more amino acids incorporated), which drop off the ribosome during protein synthesis, or as a result of ribosome stalling. In terms of biological role, catalyzes the release of premature peptidyl moieties from peptidyl-tRNA molecules trapped in stalled 50S ribosomal subunits, and thus maintains levels of free tRNAs and 50S ribosomes. This Frankia alni (strain DSM 45986 / CECT 9034 / ACN14a) protein is Peptidyl-tRNA hydrolase.